The sequence spans 1721 residues: Intersectin-1 (1721 aa).

In terms of domain architecture, EH 1 spans 21 to 109 (ERAKHDQQFH…PVMKQQPVAI (89 aa)). One can recognise an EF-hand 1 domain in the interval 53-88 (LPQPVLAQIWALADMNNDGRMDQVEFSIAMKLIKLK). The Ca(2+) site is built by aspartate 66, asparagine 68, aspartate 70, arginine 72, and glutamate 77. At serine 203 the chain carries Phosphoserine. One can recognise an EH 2 domain in the interval 221 to 310 (SRLKYRQLFN…PEYIPPSFRR (90 aa)). One can recognise an EF-hand 2 domain in the interval 254 to 289 (LPQAQLASIWNLSDIDQDGKLTAEEFILAMHLIDVA). The Ca(2+) site is built by aspartate 267, aspartate 269, aspartate 271, lysine 273, and glutamate 278. Serine 318 is modified (phosphoserine). Disordered stretches follow at residues 322–348 (STSV…KLPV) and 650–701 (QRRA…KQEA). The KLERQ stretch occupies residues 326-702 (DQRLPEEPVL…GEEKGKQEAQ (377 aa)). Positions 355–659 (RENFERGNLE…QRRAQERDKQ (305 aa)) form a coiled coil. Phosphoserine is present on serine 687. An SH3 1 domain is found at 740–806 (VKVVYYRALY…PANYAEKIPE (67 aa)). The tract at residues 836–868 (LAVTSSEPSTTPNNWADFSSTWPTSTNEKPETD) is disordered. Polar residues predominate over residues 838–862 (VTSSEPSTTPNNWADFSSTWPTSTN). At threonine 897 the chain carries Phosphothreonine. Phosphoserine occurs at positions 901, 902, and 904. One can recognise an SH3 2 domain in the interval 913 to 971 (VEGLQAQALYPWRAKKDNHLNFNKNDVITVLEQQDMWWFGEVQGQKGWFPKSYVKLISG). 3 positions are modified to phosphoserine: serine 978, serine 986, and serine 995. SH3 domains lie at 1002–1060 (VSGE…LKDS) and 1074–1138 (KKPE…LLSP). The required for interaction with FCHSD2 stretch occupies residues 1074–1138 (KKPEIAQVIA…PANYVKLLSP (65 aa)). The Bipartite nuclear localization signal; in isoform 2 signature appears at 1104–1127 (RKKNPGGWWEGELQARGKKRQIGW). Serine 1137 is subject to Phosphoserine. Threonine 1144 carries the post-translational modification Phosphothreonine. The region spanning 1155–1214 (AAVCQVIGMYDYTAQNDDELAFNKGQIINVLNKEDPDWWKGEVNGQVGLFPSNYVKLTTD) is the SH3 5 domain. The DH domain maps to 1237–1423 (KRQGYIHELI…EELCSQVNEG (187 aa)). One can recognise a PH domain in the interval 1462–1571 (KFLHSGKLYK…WVQKIKAASE (110 aa)). In terms of domain architecture, C2 spans 1579–1695 (KKREKAYLVR…KKDQGSKGPV (117 aa)). Serine 1645 bears the Phosphoserine mark. Residues aspartate 1667, serine 1670, and aspartate 1673 each contribute to the Ca(2+) site.

In terms of assembly, interacts (via DH domain) with CDC42. Interacts (via SH3 domain 1) with WASL. Interacts with dynamin, SNAP25 and SNAP23. Interacts with clathrin-associated proteins and other components of the endocytic machinery, such as SPIN90, EPS15, EPN1, EPN2, STON2, FCHO1, FCHO2 and DAB2. Interacts (via SH3 domains) with REPS1 and SGIP1. Interacts with ARHGAP31. Interacts with ADAM15. Interacts with PRRT2. Interacts (via SH3 domain 4) with FCHSD2 (via SH3 domain 2). Interacts (via SH3 domain 1) with DENND2B. Interacts (via SH3 domains) with CBL. Isoform 2: Interacts with CBL and DNM1. Isoform 2: Interacts with LMNA. Isoform 2: Interacts with importin subunit KPNA1; this is likely to mediate its import into the nucleus. Interacts with DNM2. As to quaternary structure, (Microbial infection) Interacts with vaccinia virus protein A36. It depends on Ca(2+) as a cofactor. In terms of tissue distribution, isoform 1 is expressed almost exclusively in the brain. Isoform 2 is detected in brain, spleen, lung, liver, heart, skeletal muscle and kidney. Isoform 5 is primarily expressed in brain, spleen, lung and kidney (at protein level). Isoform 1 and isoform 2 are detected in brain. Isoform 2 is ubiquitous in adult and fetal tissues with high expression in skeletal muscle, heart, spleen, ovary, testis and all fetal tissues tested and low expression in thymus, blood, lung, liver and pancreas. Isoform 1 is expressed almost exclusively in the brain, in all brain regions. Not expressed in the spinal cord.

The protein localises to the endomembrane system. Its subcellular location is the synapse. It localises to the synaptosome. It is found in the cell projection. The protein resides in the lamellipodium. The protein localises to the cell membrane. Its subcellular location is the membrane. It localises to the clathrin-coated pit. It is found in the recycling endosome. The protein resides in the endosome. The protein localises to the cytoplasmic vesicle. Its subcellular location is the cytoplasm. It localises to the nucleus envelope. Functionally, adapter protein that provides a link between the endocytic membrane traffic and the actin assembly machinery. Acts as a guanine nucleotide exchange factor (GEF) for CDC42, and thereby stimulates actin nucleation mediated by WASL and the ARP2/3 complex. Plays a role in the assembly and maturation of clathrin-coated vesicles. Recruits FCHSD2 to clathrin-coated pits. Involved in endocytosis of activated EGFR, and probably also other growth factor receptors. Involved in endocytosis of integrin beta-1 (ITGB1) and transferrin receptor (TFR); internalization of ITGB1 as DAB2-dependent cargo but not TFR may involve association with DAB2. Promotes ubiquitination and subsequent degradation of EGFR, and thereby contributes to the down-regulation of EGFR-dependent signaling pathways. In chromaffin cells, required for normal exocytosis of catecholamines. Required for rapid replenishment of release-ready synaptic vesicles at presynaptic active zones. Inhibits ARHGAP31 activity toward RAC1. In terms of biological role, plays a role in synaptic vesicle endocytosis in brain neurons. The protein is Intersectin-1 of Homo sapiens (Human).